Reading from the N-terminus, the 689-residue chain is Beta-galactosidase BbgII (689 aa).

Positions 122 and 160 each coordinate substrate. Residue Glu-161 is the Proton donor of the active site. Glu-320 acts as the Nucleophile in catalysis. Substrate-binding positions include Trp-328 and 368 to 371 (EKWH).

The protein belongs to the glycosyl hydrolase 42 family.

The catalysed reaction is Hydrolysis of terminal non-reducing beta-D-galactose residues in beta-D-galactosides.. This Bifidobacterium bifidum (strain DSM 20082 / JCM 1254 / BCRC 11844 / KCTC 3440 / E319f (Variant a)) protein is Beta-galactosidase BbgII.